Reading from the N-terminus, the 107-residue chain is Phosphoribosyl-ATP pyrophosphatase (107 aa).

This sequence belongs to the PRA-PH family.

The protein localises to the cytoplasm. The catalysed reaction is 1-(5-phospho-beta-D-ribosyl)-ATP + H2O = 1-(5-phospho-beta-D-ribosyl)-5'-AMP + diphosphate + H(+). It functions in the pathway amino-acid biosynthesis; L-histidine biosynthesis; L-histidine from 5-phospho-alpha-D-ribose 1-diphosphate: step 2/9. The protein is Phosphoribosyl-ATP pyrophosphatase of Sinorhizobium fredii (strain NBRC 101917 / NGR234).